The following is a 372-amino-acid chain: Queuine tRNA-ribosyltransferase (372 aa).

Asp89 serves as the catalytic Proton acceptor. Substrate contacts are provided by residues 89 to 93 (DSGGF), Asp143, Gln185, and Gly212. Residues 243–249 (GVGKPED) are RNA binding. Asp262 (nucleophile) is an active-site residue. The tract at residues 267 to 271 (TRNAR) is RNA binding; important for wobble base 34 recognition. Positions 300, 302, 305, and 331 each coordinate Zn(2+).

This sequence belongs to the queuine tRNA-ribosyltransferase family. As to quaternary structure, homodimer. Within each dimer, one monomer is responsible for RNA recognition and catalysis, while the other monomer binds to the replacement base PreQ1. The cofactor is Zn(2+).

The enzyme catalyses 7-aminomethyl-7-carbaguanine + guanosine(34) in tRNA = 7-aminomethyl-7-carbaguanosine(34) in tRNA + guanine. Its pathway is tRNA modification; tRNA-queuosine biosynthesis. Catalyzes the base-exchange of a guanine (G) residue with the queuine precursor 7-aminomethyl-7-deazaguanine (PreQ1) at position 34 (anticodon wobble position) in tRNAs with GU(N) anticodons (tRNA-Asp, -Asn, -His and -Tyr). Catalysis occurs through a double-displacement mechanism. The nucleophile active site attacks the C1' of nucleotide 34 to detach the guanine base from the RNA, forming a covalent enzyme-RNA intermediate. The proton acceptor active site deprotonates the incoming PreQ1, allowing a nucleophilic attack on the C1' of the ribose to form the product. After dissociation, two additional enzymatic reactions on the tRNA convert PreQ1 to queuine (Q), resulting in the hypermodified nucleoside queuosine (7-(((4,5-cis-dihydroxy-2-cyclopenten-1-yl)amino)methyl)-7-deazaguanosine). This is Queuine tRNA-ribosyltransferase from Pseudomonas aeruginosa (strain LESB58).